Here is a 432-residue protein sequence, read N- to C-terminus: D-amino acid dehydrogenase (432 aa).

Val-3–Trp-17 is an FAD binding site.

This sequence belongs to the DadA oxidoreductase family. FAD is required as a cofactor.

It carries out the reaction a D-alpha-amino acid + A + H2O = a 2-oxocarboxylate + AH2 + NH4(+). It participates in amino-acid degradation; D-alanine degradation; NH(3) and pyruvate from D-alanine: step 1/1. In terms of biological role, oxidative deamination of D-amino acids. This chain is D-amino acid dehydrogenase, found in Escherichia fergusonii (strain ATCC 35469 / DSM 13698 / CCUG 18766 / IAM 14443 / JCM 21226 / LMG 7866 / NBRC 102419 / NCTC 12128 / CDC 0568-73).